The sequence spans 576 residues: Proline--tRNA ligase (576 aa).

It belongs to the class-II aminoacyl-tRNA synthetase family. ProS type 1 subfamily. Homodimer.

It localises to the cytoplasm. It carries out the reaction tRNA(Pro) + L-proline + ATP = L-prolyl-tRNA(Pro) + AMP + diphosphate. In terms of biological role, catalyzes the attachment of proline to tRNA(Pro) in a two-step reaction: proline is first activated by ATP to form Pro-AMP and then transferred to the acceptor end of tRNA(Pro). As ProRS can inadvertently accommodate and process non-cognate amino acids such as alanine and cysteine, to avoid such errors it has two additional distinct editing activities against alanine. One activity is designated as 'pretransfer' editing and involves the tRNA(Pro)-independent hydrolysis of activated Ala-AMP. The other activity is designated 'posttransfer' editing and involves deacylation of mischarged Ala-tRNA(Pro). The misacylated Cys-tRNA(Pro) is not edited by ProRS. The sequence is that of Proline--tRNA ligase from Magnetococcus marinus (strain ATCC BAA-1437 / JCM 17883 / MC-1).